Consider the following 473-residue polypeptide: MTLTKQTCAKQACDCCRIRRVKCDGKRPCSSCLQNSLDCTYLQPSRKRGPKSIRLRSLKRIAEVQRESGPNTIATAPVIYKRVPKKLIDQCLRLYHDNLYVIWPLLSYDDLHKLLEEKYNDNYVYWFLTALSAATLSDLQTEIKSEEEVTFTGKQLSNLCISSCQQFDDLDNSNIFNIMTYYCLHRSFAQISNARTSYRLCCEAVGLITVAGLHREETYGSLTFEEQQLRRKLYYLLLMTERYYAIYLHCATSLDATIAPPQLELVTDPQLSMDSFLEMIRVFTVPGKCFFDALAADSTDASCTEESLKKIWNELHTTSSEIEPWSNGYIDISFSRHWIRILAWKLAYQMRGSNFSLNANNGQIPIEIARDMLIDTYLTPENLYDVHGPGVPVKTLEIATALVDIVGQYDHNMKLEAWNVLHDVCKFAFSLNHYNNDMLKRFSTKCQNALITLPISKPLQLDGYPKDNEDIDP.

Positions 13 to 39 (CDCCRIRRVKCDGKRPCSSCLQNSLDC) form a DNA-binding region, zn(2)-C6 fungal-type. The Nuclear localization signal signature appears at 46–54 (RKRGPKSIR).

It belongs to the MAL13 family.

It localises to the nucleus. In terms of biological role, regulates the coordinate transcription of structural MAL1S (maltase) and AGT1 (maltose permease) genes. In Saccharomyces cerevisiae (strain ATCC 204508 / S288c) (Baker's yeast), this protein is Maltose fermentation regulatory protein MAL13 (MAL13).